A 543-amino-acid polypeptide reads, in one-letter code: Chaperonin GroEL (543 aa).

ATP-binding positions include 29–32, 86–90, glycine 413, 476–478, and aspartate 492; these read TLGP, DGTTT, and NAA.

It belongs to the chaperonin (HSP60) family. Forms a cylinder of 14 subunits composed of two heptameric rings stacked back-to-back. Interacts with the co-chaperonin GroES.

The protein localises to the cytoplasm. The enzyme catalyses ATP + H2O + a folded polypeptide = ADP + phosphate + an unfolded polypeptide.. Functionally, together with its co-chaperonin GroES, plays an essential role in assisting protein folding. The GroEL-GroES system forms a nano-cage that allows encapsulation of the non-native substrate proteins and provides a physical environment optimized to promote and accelerate protein folding. This is Chaperonin GroEL from Streptococcus pyogenes serotype M1.